Consider the following 30-residue polypeptide: Cyclotide cter-F (30 aa).

The cyclopeptide (Gly-Asp) cross-link spans 1–30 (GIPCGESCVFIPCISSVVGCSCKSKVCYLD). Cystine bridges form between cysteine 4/cysteine 20, cysteine 8/cysteine 22, and cysteine 13/cysteine 27.

Post-translationally, contains 3 disulfide bonds. In terms of processing, this is a cyclic peptide.

Functionally, probably participates in a plant defense mechanism. The polypeptide is Cyclotide cter-F (Clitoria ternatea (Butterfly pea)).